Here is a 499-residue protein sequence, read N- to C-terminus: Protein NODULATION SIGNALING PATHWAY 2 (499 aa).

The segment at 64–106 (NNTGPAFSDHTASTTSEEEEEEEATTTTMTTTTTTTTTTPEAA) is disordered. Low complexity predominate over residues 88–104 (TTTTMTTTTTTTTTTPE). One can recognise a GRAS domain in the interval 106–491 (ADDDFKGLRL…RRLLSASLWT (386 aa)). Residues 113 to 182 (LRLVHLLMAG…AGGAYNSSSK (70 aa)) form a leucine repeat I (LRI) region. Residues 201 to 265 (FQLLQDMSPY…PNGPHLRITA (65 aa)) are VHIID. The VHIID signature appears at 232-236 (VHIVD). The tract at residues 281–313 (ETGRRLTAFATSLGQPFSFHHSRLESDETFRPA) is leucine repeat II (LRII). Positions 323 to 414 (LVFNCMLNLP…RVFLGPRIVG (92 aa)) are PFYRE. Residues 417–491 (ARIYRTGGGG…RRLLSASLWT (75 aa)) are SAW.

Belongs to the GRAS family. In terms of assembly, interacts with IPN2. Binds to RAD1. Interacts with RAM1. Highly expressed in roots.

Its subcellular location is the nucleus membrane. The protein resides in the endoplasmic reticulum. Transcriptional regulator essential for Nod-factor-induced gene expression. Acts downstream of calcium spiking and a calcium/calmodulin-dependent protein kinase required for activation of early nodulation gene expression. Transcription factor involved in the induction of NIN and ENOD40 genes, which are required for rhizobial infection and early nodule development. Does not seem to contribute to the early steps of the arbuscular mycorrhizal fungus infection and colonization processes in roots. Transcription factor involved in the positive regulation of the beta-carotene isomerase D27, which participates in a pathway leading to biosynthesis of strigolactones in roots. In Lotus japonicus (Lotus corniculatus var. japonicus), this protein is Protein NODULATION SIGNALING PATHWAY 2.